A 368-amino-acid chain; its full sequence is MDPDRQADIAALDTTLTTVERVLDVDGLRNRIEQLEKDASDPNLWDDQTRAQKVTSDLSHAQNELRRVEGLRQRLDDLPVLYELAAEAGGPDEVAEADAELAKLREDIEAMEVRTLLSGEYDEREAVVTIRSGAGGVDAADWAEMLMRMYIRWAEKHDYPVEIFDTSYAEEAGIKSATFAVHAPFAYGTLSVEQGTHRLVRISPFDNQSRRQTSFADVEVLPVVETTDHIEIPENDIRVDVYRSSGPGGQSVNTTDSAVRLTHIPTGIVVTCQNEKSQLQNKVSAMRVLQAKLLERKRLEERAELDALKGDGGSSWGNQMRSYVLHPYQMVKDLRTEYEVGNPASVLDGDIDGFLEAGIRWRNRKDDD.

At glutamine 250 the chain carries N5-methylglutamine.

This sequence belongs to the prokaryotic/mitochondrial release factor family. Post-translationally, methylated by PrmC. Methylation increases the termination efficiency of RF2.

It is found in the cytoplasm. In terms of biological role, peptide chain release factor 2 directs the termination of translation in response to the peptide chain termination codons UGA and UAA. The sequence is that of Peptide chain release factor 2 from Mycolicibacterium smegmatis (strain ATCC 700084 / mc(2)155) (Mycobacterium smegmatis).